Here is a 282-residue protein sequence, read N- to C-terminus: Elongation factor Ts (282 aa).

Residues 79-82 are involved in Mg(2+) ion dislocation from EF-Tu; sequence TDFV.

It belongs to the EF-Ts family.

Its subcellular location is the cytoplasm. In terms of biological role, associates with the EF-Tu.GDP complex and induces the exchange of GDP to GTP. It remains bound to the aminoacyl-tRNA.EF-Tu.GTP complex up to the GTP hydrolysis stage on the ribosome. This chain is Elongation factor Ts, found in Colwellia psychrerythraea (strain 34H / ATCC BAA-681) (Vibrio psychroerythus).